Here is a 270-residue protein sequence, read N- to C-terminus: 3-phenylpropionate-dihydrodiol/cinnamic acid-dihydrodiol dehydrogenase (270 aa).

10 to 34 (FITGGGSGLGLALVERFIEEGAQVA) lines the NAD(+) pocket. A substrate-binding site is contributed by Ser-143. Tyr-156 acts as the Proton acceptor in catalysis.

The protein belongs to the short-chain dehydrogenases/reductases (SDR) family.

The enzyme catalyses 3-(cis-5,6-dihydroxycyclohexa-1,3-dien-1-yl)propanoate + NAD(+) = 3-(2,3-dihydroxyphenyl)propanoate + NADH + H(+). The catalysed reaction is (2E)-3-(cis-5,6-dihydroxycyclohexa-1,3-dien-1-yl)prop-2-enoate + NAD(+) = (2E)-3-(2,3-dihydroxyphenyl)prop-2-enoate + NADH + H(+). Its pathway is aromatic compound metabolism; 3-phenylpropanoate degradation. Its function is as follows. Converts 3-phenylpropionate-dihydrodiol (PP-dihydrodiol) and cinnamic acid-dihydrodiol (CI-dihydrodiol) into 3-(2,3-dihydroxylphenyl)propanoic acid (DHPP) and 2,3-dihydroxicinnamic acid (DHCI), respectively. The chain is 3-phenylpropionate-dihydrodiol/cinnamic acid-dihydrodiol dehydrogenase from Escherichia coli (strain K12 / MC4100 / BW2952).